We begin with the raw amino-acid sequence, 159 residues long: Major strawberry allergen Fra a 1-C (159 aa).

This sequence belongs to the BetVI family. As to quaternary structure, monomer.

The protein is Major strawberry allergen Fra a 1-C of Fragaria ananassa (Strawberry).